The following is a 20-amino-acid chain: Venom prothrombin activator notanarin-D (20 aa).

One can recognise a Gla domain in the interval 1 to 10; that stretch reads SNSLFEEVRP. A 4-carboxyglutamate mark is found at Glu6 and Glu7. The Peptidase S1 domain occupies 11-20; it reads IVNGMDCKLG.

Belongs to the peptidase S1 family. Snake venom subfamily. As to quaternary structure, heterodimer of a light chain and a heavy chain; disulfide-linked. Gamma-carboxyglutamate residues are formed by vitamin K dependent carboxylation. These residues are essential for the binding of calcium. In terms of tissue distribution, expressed by the venom gland.

The protein resides in the secreted. The catalysed reaction is Selective cleavage of Arg-|-Thr and then Arg-|-Ile bonds in prothrombin to form thrombin.. In terms of biological role, snake prothrombin activator that attacks the hemostatic system of prey. This protein is functionally similar to blood coagulation factor Xa. The chain is Venom prothrombin activator notanarin-D from Notechis scutatus niger (Peninsula tiger snake).